The sequence spans 256 residues: Triosephosphate isomerase (256 aa).

10–12 (NWK) serves as a coordination point for substrate. The Electrophile role is filled by histidine 99. The Proton acceptor role is filled by glutamate 171. Substrate contacts are provided by residues glycine 177, serine 216, and 237–238 (GG).

The protein belongs to the triosephosphate isomerase family. In terms of assembly, homodimer.

Its subcellular location is the cytoplasm. It carries out the reaction D-glyceraldehyde 3-phosphate = dihydroxyacetone phosphate. The protein operates within carbohydrate biosynthesis; gluconeogenesis. It participates in carbohydrate degradation; glycolysis; D-glyceraldehyde 3-phosphate from glycerone phosphate: step 1/1. Involved in the gluconeogenesis. Catalyzes stereospecifically the conversion of dihydroxyacetone phosphate (DHAP) to D-glyceraldehyde-3-phosphate (G3P). This chain is Triosephosphate isomerase, found in Colwellia psychrerythraea (strain 34H / ATCC BAA-681) (Vibrio psychroerythus).